A 291-amino-acid chain; its full sequence is Shikimate dehydrogenase (NADP(+)) (291 aa).

Shikimate is bound by residues 26 to 28 (SLS) and Ser-73. Residue Lys-77 is the Proton acceptor of the active site. The shikimate site is built by Asn-98 and Asp-113. Residues 137-141 (GAGGA) and Val-238 each bind NADP(+). Tyr-240 contributes to the shikimate binding site. Gly-261 is a binding site for NADP(+).

This sequence belongs to the shikimate dehydrogenase family. As to quaternary structure, homodimer.

The catalysed reaction is shikimate + NADP(+) = 3-dehydroshikimate + NADPH + H(+). Its pathway is metabolic intermediate biosynthesis; chorismate biosynthesis; chorismate from D-erythrose 4-phosphate and phosphoenolpyruvate: step 4/7. In terms of biological role, involved in the biosynthesis of the chorismate, which leads to the biosynthesis of aromatic amino acids. Catalyzes the reversible NADPH linked reduction of 3-dehydroshikimate (DHSA) to yield shikimate (SA). The protein is Shikimate dehydrogenase (NADP(+)) of Listeria monocytogenes serotype 4b (strain F2365).